We begin with the raw amino-acid sequence, 427 residues long: Enolase (427 aa).

Gln-163 contributes to the (2R)-2-phosphoglycerate binding site. Glu-205 (proton donor) is an active-site residue. Asp-242, Glu-288, and Asp-315 together coordinate Mg(2+). 4 residues coordinate (2R)-2-phosphoglycerate: Lys-340, Arg-369, Ser-370, and Lys-391. Lys-340 acts as the Proton acceptor in catalysis.

It belongs to the enolase family. It depends on Mg(2+) as a cofactor.

It localises to the cytoplasm. Its subcellular location is the secreted. It is found in the cell surface. It carries out the reaction (2R)-2-phosphoglycerate = phosphoenolpyruvate + H2O. The protein operates within carbohydrate degradation; glycolysis; pyruvate from D-glyceraldehyde 3-phosphate: step 4/5. Catalyzes the reversible conversion of 2-phosphoglycerate (2-PG) into phosphoenolpyruvate (PEP). It is essential for the degradation of carbohydrates via glycolysis. The polypeptide is Enolase (Amoebophilus asiaticus (strain 5a2)).